The sequence spans 450 residues: Phosphoglucosamine mutase (450 aa).

The active-site Phosphoserine intermediate is the S101. S101, D240, D242, and D244 together coordinate Mg(2+). The residue at position 101 (S101) is a Phosphoserine.

The protein belongs to the phosphohexose mutase family. Requires Mg(2+) as cofactor. In terms of processing, activated by phosphorylation.

The enzyme catalyses alpha-D-glucosamine 1-phosphate = D-glucosamine 6-phosphate. In terms of biological role, catalyzes the conversion of glucosamine-6-phosphate to glucosamine-1-phosphate. The sequence is that of Phosphoglucosamine mutase from Streptococcus sanguinis (strain SK36).